The following is a 449-amino-acid chain: PC-esterase domain-containing protein 1A (449 aa).

This sequence belongs to the PC-esterase family.

The protein is PC-esterase domain-containing protein 1A (Pced1a) of Mus musculus (Mouse).